Consider the following 876-residue polypeptide: GRB2-associated and regulator of MAPK protein (876 aa).

A CABIT region spans residues 9 to 318; the sequence is KDVKWSSASF…NLIKGEVWQD (310 aa). Tyrosine 451 carries the phosphotyrosine modification. Disordered stretches follow at residues 460-569 and 708-741; these read SVKR…TLSY and DRMLGDNSTKQSLSCPALPPRAPKPSEGNALSEP. The segment covering 461–471 has biased composition (polar residues); it reads VKRSGQPLTRS. The span at 532 to 549 shows a compositional bias: pro residues; it reads PPVPPRSSKPSSPTPSVP. The segment covering 556-569 has biased composition (polar residues); that stretch reads VRQQTRSPSPTLSY. The SAM domain maps to 811–876; that stretch reads LSVEEVSKSL…QFINGWRPKM (66 aa).

The protein belongs to the GAREM family.

Functionally, adapter protein that may provide a link between cell surface epidermal growth factor receptor and the MAPK/ERK signaling pathway. May promote cell proliferation. The polypeptide is GRB2-associated and regulator of MAPK protein (garem1) (Xenopus laevis (African clawed frog)).